Consider the following 316-residue polypeptide: GTP cyclohydrolase FolE2 1 (316 aa).

This sequence belongs to the GTP cyclohydrolase IV family.

It catalyses the reaction GTP + H2O = 7,8-dihydroneopterin 3'-triphosphate + formate + H(+). Its pathway is cofactor biosynthesis; 7,8-dihydroneopterin triphosphate biosynthesis; 7,8-dihydroneopterin triphosphate from GTP: step 1/1. In terms of biological role, converts GTP to 7,8-dihydroneopterin triphosphate. The protein is GTP cyclohydrolase FolE2 1 of Burkholderia lata (strain ATCC 17760 / DSM 23089 / LMG 22485 / NCIMB 9086 / R18194 / 383).